The following is a 50-amino-acid chain: Large ribosomal subunit protein eL39 (50 aa).

Belongs to the eukaryotic ribosomal protein eL39 family. Part of the 50S ribosomal subunit. Interacts weakly with protein L23.

Functionally, binds to the 23S rRNA. Forms part of the polypeptide exit tunnel. The chain is Large ribosomal subunit protein eL39 (rpl39e) from Haloarcula marismortui (strain ATCC 43049 / DSM 3752 / JCM 8966 / VKM B-1809) (Halobacterium marismortui).